The sequence spans 131 residues: Snaclec A8 (131 aa).

Disulfide bonds link Cys2/Cys13, Cys30/Cys129, and Cys104/Cys121. In terms of domain architecture, C-type lectin spans 9–130 (HEGHCYKVFN…CGQPYRFTCE (122 aa)).

The protein belongs to the snaclec family. In terms of assembly, heterodimer; disulfide-linked. Expressed by the venom gland.

It localises to the secreted. Functionally, interferes with one step of hemostasis (modulation of platelet aggregation, or coagulation cascade, for example). This is Snaclec A8 from Macrovipera lebetinus (Levantine viper).